Consider the following 78-residue polypeptide: UPF0270 protein YE3952 (78 aa).

Belongs to the UPF0270 family.

The sequence is that of UPF0270 protein YE3952 from Yersinia enterocolitica serotype O:8 / biotype 1B (strain NCTC 13174 / 8081).